The chain runs to 300 residues: Protoheme IX farnesyltransferase (300 aa).

9 helical membrane passes run 24–44 (VTQL…PGMV), 48–68 (VLLG…AINC), 94–114 (LQIL…LYTF), 118–138 (LTMW…TLLL), 146–166 (IVIG…AVTG), 172–192 (AWIL…VLAL), 217–237 (LHIL…FISG), 239–259 (SGAV…AYAW), and 278–298 (IVYL…RPVI).

The protein belongs to the UbiA prenyltransferase family. Protoheme IX farnesyltransferase subfamily.

The protein localises to the cell inner membrane. The catalysed reaction is heme b + (2E,6E)-farnesyl diphosphate + H2O = Fe(II)-heme o + diphosphate. Its pathway is porphyrin-containing compound metabolism; heme O biosynthesis; heme O from protoheme: step 1/1. Its function is as follows. Converts heme B (protoheme IX) to heme O by substitution of the vinyl group on carbon 2 of heme B porphyrin ring with a hydroxyethyl farnesyl side group. This is Protoheme IX farnesyltransferase from Burkholderia pseudomallei (strain 1106a).